We begin with the raw amino-acid sequence, 200 residues long: Dephospho-CoA kinase (200 aa).

Positions 4 to 200 constitute a DPCK domain; the sequence is VIGLTGGIAS…AILKKWNIID (197 aa). Residue 12–17 participates in ATP binding; it reads ASGKST.

The protein belongs to the CoaE family.

The protein resides in the cytoplasm. It carries out the reaction 3'-dephospho-CoA + ATP = ADP + CoA + H(+). The protein operates within cofactor biosynthesis; coenzyme A biosynthesis; CoA from (R)-pantothenate: step 5/5. In terms of biological role, catalyzes the phosphorylation of the 3'-hydroxyl group of dephosphocoenzyme A to form coenzyme A. The sequence is that of Dephospho-CoA kinase from Bacillus anthracis.